Consider the following 260-residue polypeptide: Neurotrophin-3 (260 aa).

The N-terminal stretch at Met1–Ala18 is a signal peptide. Positions Thr19–Arg141 are excised as a propeptide. An N-linked (GlcNAc...) asparagine glycan is attached at Asn134. 3 disulfide bridges follow: Cys155–Cys220, Cys198–Cys249, and Cys208–Cys251.

Belongs to the NGF-beta family.

It is found in the secreted. Seems to promote the survival of visceral and proprioceptive sensory neurons. This Xenopus laevis (African clawed frog) protein is Neurotrophin-3 (ntf3).